The chain runs to 251 residues: Probable transcriptional regulatory protein Pmob_0807 (251 aa).

The disordered stretch occupies residues 1–22 (MSGHNKWANIKHRKGAQDAKRS).

The protein belongs to the TACO1 family.

It is found in the cytoplasm. The protein is Probable transcriptional regulatory protein Pmob_0807 of Petrotoga mobilis (strain DSM 10674 / SJ95).